A 527-amino-acid polypeptide reads, in one-letter code: Beta-glucosidase 19 (527 aa).

The N-terminal stretch at 1–21 is a signal peptide; sequence MKIPLLGLLLLISLVGSPTRA. Residues Gln-52 and His-155 each contribute to the a beta-D-glucoside site. N-linked (GlcNAc...) asparagine glycosylation occurs at Asn-183. 200–201 lines the a beta-D-glucoside pocket; sequence NE. The active-site Proton donor is the Glu-201. The cysteines at positions 220 and 231 are disulfide-linked. Positions 345 and 418 each coordinate a beta-D-glucoside. Glu-418 (nucleophile) is an active-site residue. Asn-462 carries N-linked (GlcNAc...) asparagine glycosylation. A beta-D-glucoside contacts are provided by residues Trp-469, 476-477, and Phe-485; that span reads EW. A glycan (N-linked (GlcNAc...) asparagine) is linked at Asn-495. A Prevents secretion from ER motif is present at residues 524 to 527; that stretch reads HEEL.

Belongs to the glycosyl hydrolase 1 family.

It is found in the endoplasmic reticulum lumen. It carries out the reaction Hydrolysis of terminal, non-reducing beta-D-glucosyl residues with release of beta-D-glucose.. This is Beta-glucosidase 19 from Arabidopsis thaliana (Mouse-ear cress).